Reading from the N-terminus, the 314-residue chain is Methionyl-tRNA formyltransferase (314 aa).

110-113 is a binding site for (6S)-5,6,7,8-tetrahydrofolate; it reads SLLP.

The protein belongs to the Fmt family.

The enzyme catalyses L-methionyl-tRNA(fMet) + (6R)-10-formyltetrahydrofolate = N-formyl-L-methionyl-tRNA(fMet) + (6S)-5,6,7,8-tetrahydrofolate + H(+). Attaches a formyl group to the free amino group of methionyl-tRNA(fMet). The formyl group appears to play a dual role in the initiator identity of N-formylmethionyl-tRNA by promoting its recognition by IF2 and preventing the misappropriation of this tRNA by the elongation apparatus. This chain is Methionyl-tRNA formyltransferase, found in Bacillus cytotoxicus (strain DSM 22905 / CIP 110041 / 391-98 / NVH 391-98).